Consider the following 142-residue polypeptide: Hemoglobin subunit alpha-A (142 aa).

Residues 2–142 form the Globin domain; that stretch reads VLSAADKGNV…VATVLTAKYR (141 aa). Histidine 59 is a binding site for O2. Histidine 88 lines the heme b pocket.

This sequence belongs to the globin family. Heterotetramer of two alpha chains and two beta chains. In terms of tissue distribution, red blood cells.

In terms of biological role, involved in oxygen transport from the lung to the various peripheral tissues. The protein is Hemoglobin subunit alpha-A (HBAA) of Anseranas semipalmata (Magpie goose).